The primary structure comprises 614 residues: Vitamin B12 transporter BtuB (614 aa).

Residues 1-20 (MIKKASLLTACSVTAFSAWA) form the signal peptide. Residues 26–33 (DTLVVTAN) carry the TonB box motif. The TBDR plug domain occupies 38–152 (PRSTVLAPTT…IGGVVNIITT (115 aa)). Cyanocob(III)alamin is bound by residues leucine 83, serine 85, asparagine 92, and 110 to 111 (VS). The 460-residue stretch at 155–614 (HPGTEISAGW…EYTLXGSYTF (460 aa)) folds into the TBDR beta-barrel domain. 3 consecutive transmembrane segments (beta stranded) span residues 158 to 165 (TEISAGWG), 169 to 178 (YQNYDVSTQQ), and 184 to 195 (TRVTLLGDYAHT). Residues aspartate 199, glutamine 211, aspartate 213, and aspartate 215 each contribute to the Ca(2+) site. 2 consecutive transmembrane segments (beta stranded) span residues 217–227 (FLSKTLYGALE) and 232–248 (DAWSGFVRGYGYDNRTN). Residues tyrosine 249 and aspartate 250 each coordinate Ca(2+). Residue alanine 251 coordinates cyanocob(III)alamin. Position 261 (aspartate 261) interacts with Ca(2+). The next 14 membrane-spanning stretches (beta stranded) occupy residues 263-277 (RKLYSQSWDAGLRYN), 279-296 (ELIKSQLITSYSHSKDYN), 309-325 (TLDEMKQYTVQWANNII), 328-337 (HGNIGAGVDW), 353-369 (YDQRNTGIYLTGLQQVG), 371-381 (FTFEGAGRSDD), 385-400 (FGRHGTWQTSAGWEFI), 403-417 (YRFIASYGTSYKAPN), 434-443 (KSKQWEGAFE), 449-458 (VNWRISGYRN), 473-490 (YYNEGKARIKGVEATANF), 494-509 (PLTHTVSYDYVDARNA), 517-529 (RRAKQQVKYQLDW), and 535-550 (DWGITYQYLGTRYDKD). Threonine 309 contacts cyanocob(III)alamin. Arginine 517 is a cyanocob(III)alamin binding site. Tyrosine 551 provides a ligand contact to cyanocob(III)alamin. Beta stranded transmembrane passes span 558 to 572 (TVKMGGVSLWDLAVA), 585 to 596 (IANLFDKDYETV), and 602 to 614 (AGREYTLXGSYTF). The TonB C-terminal box signature appears at 597-614 (YGYQTAGREYTLXGSYTF).

The protein belongs to the TonB-dependent receptor family. BtuB (TC 1.B.14.3.1) subfamily.

Its subcellular location is the cell outer membrane. In terms of biological role, involved in the active translocation of vitamin B12 (cyanocobalamin) across the outer membrane to the periplasmic space. It derives its energy for transport by interacting with the trans-periplasmic membrane protein TonB. This Escherichia coli O6:H1 (strain CFT073 / ATCC 700928 / UPEC) protein is Vitamin B12 transporter BtuB.